Here is a 122-residue protein sequence, read N- to C-terminus: Cofilin-5 (122 aa).

The region spanning Ser3–Leu122 is the ADF-H domain.

It belongs to the actin-binding proteins ADF family.

The protein localises to the cytoplasm. Its subcellular location is the cytoskeleton. Its function is as follows. Controls actin polymerization and depolymerization. This is Cofilin-5 (cofF) from Dictyostelium discoideum (Social amoeba).